The sequence spans 60 residues: Large ribosomal subunit protein bL32B (60 aa).

Residues 1–19 (MAVPKRKMSRANTRHRRSQ) show a composition bias toward basic residues. The interval 1–20 (MAVPKRKMSRANTRHRRSQW) is disordered.

It belongs to the bacterial ribosomal protein bL32 family.

The chain is Large ribosomal subunit protein bL32B from Saccharopolyspora erythraea (strain ATCC 11635 / DSM 40517 / JCM 4748 / NBRC 13426 / NCIMB 8594 / NRRL 2338).